The primary structure comprises 1504 residues: DNA-directed RNA polymerase subunit beta' (1504 aa).

4 residues coordinate Zn(2+): cysteine 60, cysteine 62, cysteine 75, and cysteine 78. A disordered region spans residues 265-294 (RKQRDLEDAEQLTGAERERKEYEASQERER). A compositionally biased stretch (basic and acidic residues) spans 279 to 294 (AERERKEYEASQERER). Positions 626, 628, and 630 each coordinate Mg(2+). Positions 1002, 1075, 1082, and 1085 each coordinate Zn(2+). The tract at residues 1468-1504 (RALIGGDGDDGERNNGDFDDQVGEDVVIPPDDDDQEA) is disordered.

This sequence belongs to the RNA polymerase beta' chain family. As to quaternary structure, the RNAP catalytic core consists of 2 alpha, 1 beta, 1 beta' and 1 omega subunit. When a sigma factor is associated with the core the holoenzyme is formed, which can initiate transcription. It depends on Mg(2+) as a cofactor. The cofactor is Zn(2+).

It catalyses the reaction RNA(n) + a ribonucleoside 5'-triphosphate = RNA(n+1) + diphosphate. DNA-dependent RNA polymerase catalyzes the transcription of DNA into RNA using the four ribonucleoside triphosphates as substrates. The chain is DNA-directed RNA polymerase subunit beta' from Roseiflexus sp. (strain RS-1).